The chain runs to 226 residues: Leucyl/phenylalanyl-tRNA--protein transferase (226 aa).

The protein belongs to the L/F-transferase family.

The protein localises to the cytoplasm. It catalyses the reaction N-terminal L-lysyl-[protein] + L-leucyl-tRNA(Leu) = N-terminal L-leucyl-L-lysyl-[protein] + tRNA(Leu) + H(+). It carries out the reaction N-terminal L-arginyl-[protein] + L-leucyl-tRNA(Leu) = N-terminal L-leucyl-L-arginyl-[protein] + tRNA(Leu) + H(+). The enzyme catalyses L-phenylalanyl-tRNA(Phe) + an N-terminal L-alpha-aminoacyl-[protein] = an N-terminal L-phenylalanyl-L-alpha-aminoacyl-[protein] + tRNA(Phe). In terms of biological role, functions in the N-end rule pathway of protein degradation where it conjugates Leu, Phe and, less efficiently, Met from aminoacyl-tRNAs to the N-termini of proteins containing an N-terminal arginine or lysine. The chain is Leucyl/phenylalanyl-tRNA--protein transferase from Ectopseudomonas mendocina (strain ymp) (Pseudomonas mendocina).